The following is a 679-amino-acid chain: Protein hook (679 aa).

The Calponin-homology (CH) domain maps to 6 to 123 (NEMYYSLLEW…RLLQLVLGCA (118 aa)). Coiled-coil stretches lie at residues 135-437 (EIMC…LKCG) and 480-574 (QTAL…QEIL).

This sequence belongs to the hook family. As to quaternary structure, homodimer. Interacts with microtubules via its N-terminus.

The protein resides in the cytoplasm. Its subcellular location is the cytoskeleton. It localises to the endosome. It is found in the synapse. Functionally, involved in endocytic trafficking by stabilizing organelles of the endocytic pathway. Probably acts as a cytoskeletal linker protein required to tether endosome vesicles to the cytoskeleton. Involved in modulation of endocytosis at stages required for down-regulation of membrane proteins that control synapse size. Not involved in synaptic vesicle recycling. Required in R7 cells for boss endocytosis into multivesicular bodies (MVBs). Has a role in regulating adult longevity. The polypeptide is Protein hook (Drosophila yakuba (Fruit fly)).